Here is a 316-residue protein sequence, read N- to C-terminus: MEEKQREKVVVIIGPTAVGKTKLSIELAKALNGEIVSGDSMQIYRTMDIGTAKVTADEMEGIPHYMIDIKDPEDSFSVAEFQELVRGHIREITKRGKLPIIVGGTGLYIQSVLYDYQFTDEAGDTAYRERMEKLAEEQGVEFVHKKLEEVDPESAKRIHANNVRRVIRALEIFQTTGKKMSEQLEKQKNELLYDVVLIGLTMDRTMLYDRINLRVDLMMEQGLEQEVKRLYQNGVRDCQSIQAIGYKELYRYFAGATSLEEAISQLKTNSRRYAKRQLTWFRNKMDVAWFDVTDGEKTAEILRYIEGKLQLKSNNN.

14-21 (GPTAVGKT) is an ATP binding site. 16-21 (TAVGKT) contributes to the substrate binding site. Residues 39-42 (DSMQ) form an interaction with substrate tRNA region.

This sequence belongs to the IPP transferase family. As to quaternary structure, monomer. The cofactor is Mg(2+).

The catalysed reaction is adenosine(37) in tRNA + dimethylallyl diphosphate = N(6)-dimethylallyladenosine(37) in tRNA + diphosphate. In terms of biological role, catalyzes the transfer of a dimethylallyl group onto the adenine at position 37 in tRNAs that read codons beginning with uridine, leading to the formation of N6-(dimethylallyl)adenosine (i(6)A). The polypeptide is tRNA dimethylallyltransferase (Bacillus cytotoxicus (strain DSM 22905 / CIP 110041 / 391-98 / NVH 391-98)).